The sequence spans 177 residues: Ribonuclease M5 (177 aa).

Positions 5–99 constitute a Toprim domain; that stretch reads KQIIIVEGKT…NKTSKKIGIA (95 aa). Residues Glu-11, Asp-59, and Asp-61 each contribute to the Mg(2+) site.

Belongs to the ribonuclease M5 family. It depends on Mg(2+) as a cofactor.

The protein localises to the cytoplasm. The enzyme catalyses Endonucleolytic cleavage of RNA, removing 21 and 42 nucleotides, respectively, from the 5'- and 3'-termini of a 5S-rRNA precursor.. Its function is as follows. Required for correct processing of both the 5' and 3' ends of 5S rRNA precursor. Cleaves both sides of a double-stranded region yielding mature 5S rRNA in one step. The polypeptide is Ribonuclease M5 (Mycoplasma mycoides subsp. mycoides SC (strain CCUG 32753 / NCTC 10114 / PG1)).